A 387-amino-acid chain; its full sequence is Sorting nexin-7 (387 aa).

Residues 30 to 151 (KDLFITVDAP…VFLTAQAEEL (122 aa)) form the PX domain. 4 residues coordinate a 1,2-diacyl-sn-glycero-3-phospho-(1D-myo-inositol-3-phosphate): Arg73, Gln75, Lys103, and Arg117. Positions 178-387 (GVKNRPEEFM…PSEEDSEEKL (210 aa)) constitute a BAR domain.

Belongs to the sorting nexin family. In terms of assembly, heterodimer; heterodimerizes with SNX4.

It is found in the early endosome membrane. Involved in the regulation of endocytosis and in several stages of intracellular trafficking. Together with SNX4, involved in autophagosome assembly by regulating trafficking and recycling of phospholipid scramblase ATG9A. The sequence is that of Sorting nexin-7 from Mus musculus (Mouse).